The primary structure comprises 197 residues: Beta-crystallin A2 (197 aa).

The interval methionine 1 to proline 11 is N-terminal arm. Beta/gamma crystallin 'Greek key' domains follow at residues alanine 12–asparagine 52 and glycine 53–leucine 99. The interval cysteine 100 to aspartate 105 is connecting peptide. Beta/gamma crystallin 'Greek key' domains follow at residues serine 106–serine 147 and glycine 148–glutamine 196.

The protein belongs to the beta/gamma-crystallin family. As to quaternary structure, homo/heterodimer, or complexes of higher-order. The structure of beta-crystallin oligomers seems to be stabilized through interactions between the N-terminal arms.

Its function is as follows. Crystallins are the dominant structural components of the vertebrate eye lens. The polypeptide is Beta-crystallin A2 (CRYBA2) (Bos taurus (Bovine)).